Here is a 451-residue protein sequence, read N- to C-terminus: Tubulin alpha-2 chain (451 aa).

Q11 lines the GTP pocket. K40 carries the N6-acetyllysine modification. 6 residues coordinate GTP: E71, G144, T145, T179, N206, and N228. E71 contacts Mg(2+). The active site involves E254.

It belongs to the tubulin family. Dimer of alpha and beta chains. A typical microtubule is a hollow water-filled tube with an outer diameter of 25 nm and an inner diameter of 15 nM. Alpha-beta heterodimers associate head-to-tail to form protofilaments running lengthwise along the microtubule wall with the beta-tubulin subunit facing the microtubule plus end conferring a structural polarity. Microtubules usually have 13 protofilaments but different protofilament numbers can be found in some organisms and specialized cells. Mg(2+) is required as a cofactor. Undergoes a tyrosination/detyrosination cycle, the cyclic removal and re-addition of a C-terminal tyrosine residue by the enzymes tubulin tyrosine carboxypeptidase (TTCP) and tubulin tyrosine ligase (TTL), respectively. In terms of processing, acetylation of alpha chains at Lys-40 stabilizes microtubules and affects affinity and processivity of microtubule motors. This modification has a role in multiple cellular functions, ranging from cell motility, cell cycle progression or cell differentiation to intracellular trafficking and signaling.

The protein resides in the cytoplasm. The protein localises to the cytoskeleton. The catalysed reaction is GTP + H2O = GDP + phosphate + H(+). Its function is as follows. Tubulin is the major constituent of microtubules, a cylinder consisting of laterally associated linear protofilaments composed of alpha- and beta-tubulin heterodimers. Microtubules grow by the addition of GTP-tubulin dimers to the microtubule end, where a stabilizing cap forms. Below the cap, tubulin dimers are in GDP-bound state, owing to GTPase activity of alpha-tubulin. The sequence is that of Tubulin alpha-2 chain (TUBA2) from Hordeum vulgare (Barley).